Consider the following 727-residue polypeptide: Prolyl endopeptidase-like (727 aa).

At Met-1 the chain carries N-acetylmethionine. Catalysis depends on charge relay system residues Ser-559, Asp-645, and His-690.

This sequence belongs to the peptidase S9A family. Homodimer. Interacts with the AP-1 complex. As to expression, expressed in pyramidal neurons of the temporal cortex and neocortex (at protein level). Widely expressed. Expressed at higher level in brain, skeletal muscle, heart and kidney. Expressed at the endplates in the neuromuscular junction.

The protein localises to the cytoplasm. It is found in the cytosol. Its subcellular location is the golgi apparatus. It localises to the trans-Golgi network. The protein resides in the cytoskeleton. The protein localises to the nucleus. With respect to regulation, inhibited by PMSF and Prefabloc, as well as leupeptin at high concentrations. Partially inhibited by TPCK, a chymotrypsin inhibitor and E64, a cysteine protease inhibitor. Not affected by 4-amidinophenyl-methanesulfonyl fluoride (APMSF), pepstatin or EDTA. Inhibited by 1-isobutyl-3-oxo-3,5,6,7-tetrahydro-2H-cyclopenta[c]pyridine-4-carbonitrile. In terms of biological role, serine peptidase whose precise substrate specificity remains unclear. Does not cleave peptides after a arginine or lysine residue. Regulates trans-Golgi network morphology and sorting by regulating the membrane binding of the AP-1 complex. May play a role in the regulation of synaptic vesicle exocytosis. This is Prolyl endopeptidase-like (PREPL) from Homo sapiens (Human).